Here is a 411-residue protein sequence, read N- to C-terminus: Serpin A3-2 (411 aa).

The signal sequence occupies residues 1 to 24 (MRAERTSFLLALGLLVAGIRSVHC). Residues asparagine 100, asparagine 180, asparagine 230, and asparagine 264 are each glycosylated (N-linked (GlcNAc...) asparagine).

Belongs to the serpin family. As to quaternary structure, homodimer.

The protein localises to the cytoplasmic vesicle. Its subcellular location is the secretory vesicle. It is found in the chromaffin granule. It localises to the secreted. Serine protease inhibitor. This chain is Serpin A3-2, found in Bos taurus (Bovine).